The sequence spans 995 residues: MKIKFLSAAIAASLALPLSAATLVTSFEEADYSSSENNAEFLEVSGDATSEVSTEQATDGNQSIKASFDAAFKPMVVWNWASWNWGAEDVMSVDVVNPNDTDVTFAIKLIDSDILPDWVDESQTSLDYFTVSANTTQTFSFNLNGGNEFQTHGENFSKDKVIGVQFMLSENDPQVLYFDNIMVDGETVTPPPSDGAVNTQTAPVATLAQIEDFETIPDYLRPDGGVNVSTTTEIVTKGAAAMAAEFTAGWNGLVFAGTWNWAELGEHTAVAVDVSNNSDSNIWLYSRIEDVNSQGETATRGVLVKAGESKTIYTSLNDNPSLLTQDERVSALGLRDIPADPMSAQNGWGDFVALDKSQITAIRYFIGELASGETSQTLVFDNMRVIKDLNHESAYAEMTDAMGQNNLVTYAGKVASKEELAKLSDPEMAALGELTNRNMYGGNPDSSPATDCVLATPASFNACKDADGNWQLVDPAGNAFFSTGVDNIRLQDTYTMTGVSSDAESESALRQSMFTEIPSDYVNENYGPVHSGPVSQGQAVSFYANNLITRHASEDVWRDITVKRMKDWGFNTLGNWTDPALYANGDVPYVANGWSTSGADRLPVKQIGSGYWGPLPDPWDANFATNAATMAAEIKAQVEGNEEYLVGIFVDNEMSWGNVTDVEGSRYAQTLAVFNTDGTDATTSPAKNSFIWFLENQRYTGGIADLNAAWGTDYASWDATSPAQELAYVAGMEADMQFLAWQFAFQYFNTVNTALKAELPNHLYLGSRFADWGRTPDVVSAAAAVVDVMSYNIYKDSIAAADWDADALSQIEAIDKPVIIGEFHFGALDSGSFAEGVVNATSQQDRADKMVSFYESVNAHKNFVGAHWFQYIDSPLTGRAWDGENYNVGFVSNTDTPYTLMTDAAREFNCGMYGTDCSSLSNATEAASRAGELYTGTNIGVSHSGPEAPDPGEPVDPPIDPPTPPTGGVTGGGGSAGWLSLLGLAGVFLLRRRKV.

The signal sequence occupies residues 1 to 20 (MKIKFLSAAIAASLALPLSA). Residues 936-972 (GTNIGVSHSGPEAPDPGEPVDPPIDPPTPPTGGVTGG) are disordered. A compositionally biased stretch (pro residues) spans 948–965 (APDPGEPVDPPIDPPTPP).

This sequence belongs to the glycosyl hydrolase 50 family.

The catalysed reaction is Hydrolysis of (1-&gt;4)-beta-D-galactosidic linkages in agarose, giving the tetramer as the predominant product.. Hydrolyzes agarose and also neoagarotetraose to yield neoagarobiose. This is Beta-agarase A (agaA) from Vibrio sp. (strain JT0107).